The chain runs to 456 residues: Dihydroorotase (456 aa).

Histidine 60 and histidine 62 together coordinate Zn(2+). Residues 62–64 and asparagine 94 each bind substrate; that span reads HFR. 4 residues coordinate Zn(2+): glutamate 146, histidine 180, histidine 234, and aspartate 313. Aspartate 313 is a catalytic residue. Histidine 317 contacts substrate.

It belongs to the metallo-dependent hydrolases superfamily. DHOase family. Class I DHOase subfamily. The cofactor is Zn(2+).

The catalysed reaction is (S)-dihydroorotate + H2O = N-carbamoyl-L-aspartate + H(+). It functions in the pathway pyrimidine metabolism; UMP biosynthesis via de novo pathway; (S)-dihydroorotate from bicarbonate: step 3/3. In terms of biological role, catalyzes the reversible cyclization of carbamoyl aspartate to dihydroorotate. The protein is Dihydroorotase of Methanosarcina mazei (strain ATCC BAA-159 / DSM 3647 / Goe1 / Go1 / JCM 11833 / OCM 88) (Methanosarcina frisia).